A 465-amino-acid polypeptide reads, in one-letter code: UDP-N-acetylmuramate--L-alanine ligase (465 aa).

Glycine 112–threonine 118 contributes to the ATP binding site.

Belongs to the MurCDEF family.

Its subcellular location is the cytoplasm. It carries out the reaction UDP-N-acetyl-alpha-D-muramate + L-alanine + ATP = UDP-N-acetyl-alpha-D-muramoyl-L-alanine + ADP + phosphate + H(+). It participates in cell wall biogenesis; peptidoglycan biosynthesis. In terms of biological role, cell wall formation. This is UDP-N-acetylmuramate--L-alanine ligase from Burkholderia lata (strain ATCC 17760 / DSM 23089 / LMG 22485 / NCIMB 9086 / R18194 / 383).